The chain runs to 431 residues: Fumarylacetoacetase fahA (431 aa).

Aspartate 133 contributes to the Ca(2+) binding site. Tyrosine 135 serves as a coordination point for substrate. The Proton acceptor role is filled by histidine 140. A substrate-binding site is contributed by arginine 149. Residues glutamate 209, glutamate 211, and aspartate 243 each contribute to the Ca(2+) site. Aspartate 243 is a Mg(2+) binding site. Positions 250 and 254 each coordinate substrate. 2 residues coordinate Mg(2+): lysine 263 and threonine 267. Threonine 362 lines the substrate pocket. Residues 362–381 (TISGKENQTQGSLLEQTNGK) are compositionally biased toward polar residues. The interval 362–382 (TISGKENQTQGSLLEQTNGKN) is disordered.

It belongs to the FAH family. Ca(2+) is required as a cofactor. It depends on Mg(2+) as a cofactor.

It carries out the reaction 4-fumarylacetoacetate + H2O = acetoacetate + fumarate + H(+). It functions in the pathway amino-acid degradation; L-phenylalanine degradation; acetoacetate and fumarate from L-phenylalanine: step 6/6. In terms of biological role, fumarylacetoacetase; part of the L-tyrosine degradation gene cluster that mediates the biosynthesis of the brownish pigment pyomelanin as an alternative melanin. The 4-hydroxyphenylpyruvate dioxygenase hppD catalyzes the conversion of 4-hydroxyphenylpyruvate to homogentisic acid (HGA). The protein hmgX is crucial for this conversion and thus, probably functions as an accessory factor to mediate specific activity of hppD. The homogentisate 1,2-dioxygenase hmgA is then involved in the cleavage of the aromatic ring of HGA and its conversion to 4-maleylacetoacetate. When hmgA activity is lowered by the cell wall integrity (CWI) signaling pathway, HGA accumulates and leads to the production of pyomelanin through benzoquinone acetic acid after oxidation and polymerization. On the opposite, in non-stress conditions, both hppD and hmgA activities are balanced and HGA is degraded into 4-maleylacetoacetate. 4-maleylacetoacetate is further converted to 4-fumarylacetoacetate by the maleylacetoacetate isomerase maiA, which is degraded into fumarate and acetoacetate by the fumarylacetoacetase fahA. This Aspergillus fumigatus (strain ATCC MYA-4609 / CBS 101355 / FGSC A1100 / Af293) (Neosartorya fumigata) protein is Fumarylacetoacetase fahA.